The chain runs to 66 residues: Phylloseptin-H7 (66 aa).

The first 22 residues, 1-22 (MAFLKKSLFLVLFLGLVSLSIC), serve as a signal peptide directing secretion. Residues 23-44 (EEEKRETEEEENDQEEDDKSEE) constitute a propeptide that is removed on maturation. The segment at 25 to 44 (EKRETEEEENDQEEDDKSEE) is disordered. Positions 30–41 (EEEENDQEEDDK) are enriched in acidic residues. Position 65 is a leucine amide (leucine 65).

In terms of tissue distribution, expressed by the skin glands.

It localises to the secreted. Has antimicrobial activity. In Pithecopus hypochondrialis (Orange-legged leaf frog), this protein is Phylloseptin-H7.